A 618-amino-acid chain; its full sequence is V-type proton ATPase catalytic subunit A (618 aa).

Residue 251–258 (GAFGCGKT) participates in ATP binding.

It belongs to the ATPase alpha/beta chains family. V-ATPase is a heteromultimeric enzyme composed of a peripheral catalytic V1 complex (main components: subunits A, B, C, D, E, and F) attached to an integral membrane V0 proton pore complex (main component: the proteolipid protein).

The enzyme catalyses ATP + H2O + 4 H(+)(in) = ADP + phosphate + 5 H(+)(out). Its function is as follows. Catalytic subunit of the peripheral V1 complex of vacuolar ATPase. V-ATPase vacuolar ATPase is responsible for acidifying a variety of intracellular compartments in eukaryotic cells. This Dictyostelium discoideum (Social amoeba) protein is V-type proton ATPase catalytic subunit A (vatA).